The primary structure comprises 416 residues: Serine hydroxymethyltransferase (416 aa).

Residues L121 and 125-127 (GHL) each bind (6S)-5,6,7,8-tetrahydrofolate. The residue at position 229 (K229) is an N6-(pyridoxal phosphate)lysine. (6S)-5,6,7,8-tetrahydrofolate contacts are provided by residues E245 and 354–356 (SPF).

This sequence belongs to the SHMT family. As to quaternary structure, homodimer. It depends on pyridoxal 5'-phosphate as a cofactor.

The protein localises to the cytoplasm. It carries out the reaction (6R)-5,10-methylene-5,6,7,8-tetrahydrofolate + glycine + H2O = (6S)-5,6,7,8-tetrahydrofolate + L-serine. It participates in one-carbon metabolism; tetrahydrofolate interconversion. It functions in the pathway amino-acid biosynthesis; glycine biosynthesis; glycine from L-serine: step 1/1. In terms of biological role, catalyzes the reversible interconversion of serine and glycine with tetrahydrofolate (THF) serving as the one-carbon carrier. This reaction serves as the major source of one-carbon groups required for the biosynthesis of purines, thymidylate, methionine, and other important biomolecules. Also exhibits THF-independent aldolase activity toward beta-hydroxyamino acids, producing glycine and aldehydes, via a retro-aldol mechanism. This Aliivibrio salmonicida (strain LFI1238) (Vibrio salmonicida (strain LFI1238)) protein is Serine hydroxymethyltransferase.